The following is a 1393-amino-acid chain: DNA-directed RNA polymerase subunit beta' (1393 aa).

Residues cysteine 72, cysteine 74, cysteine 87, and cysteine 90 each contribute to the Zn(2+) site. Mg(2+) is bound by residues aspartate 463, aspartate 465, and aspartate 467. Residues cysteine 812, cysteine 887, cysteine 894, and cysteine 897 each coordinate Zn(2+).

The protein belongs to the RNA polymerase beta' chain family. The RNAP catalytic core consists of 2 alpha, 1 beta, 1 beta' and 1 omega subunit. When a sigma factor is associated with the core the holoenzyme is formed, which can initiate transcription. Mg(2+) serves as cofactor. The cofactor is Zn(2+).

The catalysed reaction is RNA(n) + a ribonucleoside 5'-triphosphate = RNA(n+1) + diphosphate. Its function is as follows. DNA-dependent RNA polymerase catalyzes the transcription of DNA into RNA using the four ribonucleoside triphosphates as substrates. This Chlamydia caviae (strain ATCC VR-813 / DSM 19441 / 03DC25 / GPIC) (Chlamydophila caviae) protein is DNA-directed RNA polymerase subunit beta'.